Consider the following 411-residue polypeptide: Protrudin (411 aa).

The segment at 1–27 (MQTSEREGSGPELSPSVMPEAPLESPP) is disordered. Over 1 to 66 (MQTSEREGSG…AGDGVRYLLR (66 aa)) the chain is Cytoplasmic. Positions 1–92 (MQTSEREGSG…LFLTLNEGAW (92 aa)) are sufficient for homooligomerization. Residues 1–205 (MQTSEREGSG…LYLLPLCWVL (205 aa)) form a sufficient for localization to endoplasmic reticulum tubular network and for interactions with REEP1, REEP5, ATL1, ATL2, ATL3 and SPAST region. Residues 51–64 (LEPLKDAGDGVRYL) are necessary for interaction with RAB11A and function in neurite outgrowth. The helical transmembrane segment at 67–87 (WQMPLCSLLTCLGLNVLFLTL) threads the bilayer. Residue N88 is a topological domain, lumenal. Residues 89 to 109 (EGAWYSVGALMISVPALLGYL) form a helical membrane-spanning segment. The Cytoplasmic segment spans residues 110–187 (QEVCRARLPD…NPVVSSQFYG (78 aa)). The helical intramembrane region spans 188–208 (ALLGTVCMLYLLPLCWVLTLL). Residues 209–411 (NSTLFLGNVE…CASCNQTLSK (203 aa)) lie on the Cytoplasmic side of the membrane. Positions 234–286 (MNPKQEEHAFESPPPPDVGGKDGLMDSTPALTPTEDLTPGSVEEAEEAEPDEE) are disordered. Positions 271 to 361 (TPGSVEEAEE…GCSATFSVLK (91 aa)) are necessary for interaction with KIF5A. The segment covering 276-286 (EEAEEAEPDEE) has biased composition (acidic residues). A necessary for interaction with VAPA and function in cell projections formation region spans residues 286-292 (EFKDAIE). An FYVE-type zinc finger spans residues 344–410 (TNNFGNCTGC…VCASCNQTLS (67 aa)). Zn(2+)-binding residues include C350, C353, C366, C369, C374, C377, C402, and C405.

As to quaternary structure, can form homooligomers (monomers, dimers and tetramers). Interacts with RAB11A (GDP-bound form); regulates RAB11A. Interacts with FKBP8; may negatively regulate ZFYVE27 phosphorylation. Interacts with VAPA (via MSP domain); may regulate ZFYVE27 retention in the endoplasmic reticulum and its function in cell projections formation. Interacts with VAPB (via MSP domain). Interacts with REEP1, REEP5 and ATL1. Interacts with ATL2, ATL3 and SPAST. Interacts with KIF5A and RTN3. Interacts with RAB11B (GDP-bound form), SURF4, KIF5B and KIF5C. In terms of processing, phosphorylated. Phosphorylation is induced by NGF through the MAPK/ERK pathway and modulates interaction with RAB11A.

It localises to the recycling endosome membrane. The protein resides in the endoplasmic reticulum membrane. It is found in the cell projection. Its subcellular location is the growth cone membrane. Key regulator of RAB11-dependent vesicular trafficking during neurite extension through polarized membrane transport. Promotes axonal elongation and contributes to the establishment of neuronal cell polarity. Involved in nerve growth factor-induced neurite formation in VAPA-dependent manner. Contributes to both the formation and stabilization of the tubular ER network. Involved in ER morphogenesis by regulating the sheet-to-tubule balance and possibly the density of tubule interconnections. Acts as an adapter protein and facilitates the interaction of KIF5A with VAPA, VAPB, SURF4, RAB11A, RAB11B and RTN3 and the ZFYVE27-KIF5A complex contributes to the transport of these proteins in neurons. Can induce formation of neurite-like membrane protrusions in non-neuronal cells in a KIF5A/B-dependent manner. This is Protrudin (ZFYVE27) from Homo sapiens (Human).